Consider the following 266-residue polypeptide: ATP synthase subunit a (266 aa).

A run of 7 helical transmembrane segments spans residues 41 to 61 (IDTLIMSFGLGALFCYVFWLA), 98 to 118 (VIAPLALTIFCWVFLSNLMDL), 119 to 139 (VPIDMVPSIMMAVGVDYWKIL), 152 to 172 (LSVLALIIIYGVMGQGVGGWL), 178 to 198 (HPLGPWLAPANLILNIVEFIA), 216 to 236 (LVFILISLLPWWIQWALGTPW), and 237 to 257 (AIFHILVVPLQAFIFMMLTVV).

It belongs to the ATPase A chain family. As to quaternary structure, F-type ATPases have 2 components, CF(1) - the catalytic core - and CF(0) - the membrane proton channel. CF(1) has five subunits: alpha(3), beta(3), gamma(1), delta(1), epsilon(1). CF(0) has three main subunits: a(1), b(2) and c(9-12). The alpha and beta chains form an alternating ring which encloses part of the gamma chain. CF(1) is attached to CF(0) by a central stalk formed by the gamma and epsilon chains, while a peripheral stalk is formed by the delta and b chains.

It is found in the cell inner membrane. In terms of biological role, key component of the proton channel; it plays a direct role in the translocation of protons across the membrane. This is ATP synthase subunit a from Halorhodospira halophila (strain DSM 244 / SL1) (Ectothiorhodospira halophila (strain DSM 244 / SL1)).